Reading from the N-terminus, the 851-residue chain is Envelope glycoprotein gp160 (851 aa).

The first 24 residues, 1-24, serve as a signal peptide directing secretion; the sequence is MEPGRNQLLVAILLTSACLIYCKQ. At 25-669 the chain is on the extracellular side; the sequence is YVTVFYGIPA…LTSWIKYIQY (645 aa). Asn37 carries N-linked (GlcNAc...) asparagine; by host glycosylation. Cys44 and Cys57 are joined by a disulfide. 23 N-linked (GlcNAc...) asparagine; by host glycosylation sites follow: Asn70, Asn114, Asn127, Asn134, Asn142, Asn157, Asn184, Asn195, Asn227, Asn230, Asn261, Asn267, Asn278, Asn289, Asn299, Asn355, Asn361, Asn388, Asn398, Asn401, Asn438, Asn453, and Asn456. Cystine bridges form between Cys101-Cys203, Cys108-Cys194, Cys113-Cys154, Cys216-Cys246, and Cys226-Cys238. The interval 113-153 is V1; the sequence is CNITSGTTATPSPPNITIIDENSTCIGDNNCTGLGKEEVVE. Residues 154-194 are V2; that stretch reads CEFNMTGLEQDKKRKYNDAWYSRDVVCDKTNGTGTCYMRHC. A V3 region spans residues 294 to 327; the sequence is CKRPGNKTVVPITLMSGRRFHSRPVYNKKPGQAW. Residues Cys294 and Cys328 are joined by a disulfide bond. Intrachain disulfides connect Cys380/Cys437 and Cys387/Cys410. The V4 stretch occupies residues 387–410; it reads CNMTWFLNWVENKTNQTHGNYAPC. A V5 region spans residues 453–459; it reads NQTNITF. The interval 502-522 is fusion peptide; the sequence is GVFVLGFLGFLATAGSAMGGA. The tract at residues 565-581 is immunosuppression; the sequence is LQARVTAIEKYLKDQAQ. N-linked (GlcNAc...) asparagine; by host glycosylation is found at Asn601, Asn610, and Asn626. Positions 647 to 668 are MPER; binding to GalCer; sequence KLNSWDVFGNWFDLTSWIKYIQ. Residues 670 to 690 form a helical membrane-spanning segment; it reads GVYIVVGIIGLRIAIYIVQLL. Residues 691-851 lie on the Cytoplasmic side of the membrane; it reads SRLRKGYRPV…IRQGAEIALL (161 aa). The YXXV motif; contains endocytosis signal signature appears at 697–700; the sequence is YRPV. The S-palmitoyl cysteine; by host moiety is linked to residue Cys763. The short motif at 850–851 is the Di-leucine internalization motif element; the sequence is LL.

As to quaternary structure, the mature envelope protein (Env) consists of a homotrimer of non-covalently associated gp120-gp41 heterodimers. The resulting complex protrudes from the virus surface as a spike. There seems to be as few as 10 spikes on the average virion. Interacts with human CD4, CCR5 and CXCR4, to form a P4HB/PDI-CD4-CXCR4-gp120 complex. Gp120 also interacts with the C-type lectins CD209/DC-SIGN and CLEC4M/DC-SIGNR (collectively referred to as DC-SIGN(R)). Gp120 and gp41 interact with GalCer. In terms of assembly, the mature envelope protein (Env) consists of a homotrimer of non-covalently associated gp120-gp41 heterodimers. The resulting complex protrudes from the virus surface as a spike. There seems to be as few as 10 spikes on the average virion. In terms of processing, specific enzymatic cleavages in vivo yield mature proteins. Envelope glycoproteins are synthesized as an inactive precursor that is heavily N-glycosylated and processed likely by host cell furin in the Golgi to yield the mature SU and TM proteins. The cleavage site between SU and TM requires the minimal sequence [KR]-X-[KR]-R. Palmitoylation of the transmembrane protein and of Env polyprotein (prior to its proteolytic cleavage) is essential for their association with host cell membrane lipid rafts. Palmitoylation is therefore required for envelope trafficking to classical lipid rafts, but not for viral replication.

It is found in the virion membrane. Its subcellular location is the host cell membrane. The protein localises to the host endosome membrane. The surface protein gp120 (SU) attaches the virus to the host lymphoid cell by binding to the primary receptor CD4. This interaction induces a structural rearrangement creating a high affinity binding site for a chemokine coreceptor like CXCR4 and/or CCR5. This peculiar 2 stage receptor-interaction strategy allows gp120 to maintain the highly conserved coreceptor-binding site in a cryptic conformation, protected from neutralizing antibodies. Since CD4 also displays a binding site for the disulfide-isomerase P4HB/PDI, a P4HB/PDI-CD4-CXCR4-gp120 complex may form. In that complex, P4HB/PDI could reach and reduce gp120 disulfide bonds, causing major conformational changes in gp120. TXN, another PDI family member could also be involved in disulfide rearrangements in Env during fusion. These changes are transmitted to the transmembrane protein gp41 and are thought to activate its fusogenic potential by unmasking its fusion peptide. Functionally, the surface protein gp120 is a ligand for CD209/DC-SIGN and CLEC4M/DC-SIGNR, which are respectively found on dendritic cells (DCs), and on endothelial cells of liver sinusoids and lymph node sinuses. These interactions allow capture of viral particles at mucosal surfaces by these cells and subsequent transmission to permissive cells. DCs are professional antigen presenting cells, critical for host immunity by inducing specific immune responses against a broad variety of pathogens. They act as sentinels in various tissues where they take up antigen, process it, and present it to T-cells following migration to lymphoid organs. HIV subverts the migration properties of dendritic cells to gain access to CD4+ T-cells in lymph nodes. Virus transmission to permissive T-cells occurs either in trans (without DCs infection, through viral capture and transmission), or in cis (following DCs productive infection, through the usual CD4-gp120 interaction), thereby inducing a robust infection. In trans infection, bound virions remain infectious over days and it is proposed that they are not degraded, but protected in non-lysosomal acidic organelles within the DCs close to the cell membrane thus contributing to the viral infectious potential during DCs' migration from the periphery to the lymphoid tissues. On arrival at lymphoid tissues, intact virions recycle back to DCs' cell surface allowing virus transmission to CD4+ T-cells. Virion capture also seems to lead to MHC-II-restricted viral antigen presentation, and probably to the activation of HIV-specific CD4+ cells. In terms of biological role, the transmembrane protein gp41 (TM) acts as a class I viral fusion protein. Under the current model, the protein has at least 3 conformational states: pre-fusion native state, pre-hairpin intermediate state, and post-fusion hairpin state. During fusion of viral and target intracellular membranes, the coiled coil regions (heptad repeats) assume a trimer-of-hairpins structure, positioning the fusion peptide in close proximity to the C-terminal region of the ectodomain. The formation of this structure appears to drive apposition and subsequent fusion of viral and target cell membranes. Complete fusion occurs in host cell endosomes and is dynamin-dependent, however some lipid transfer might occur at the plasma membrane. The virus undergoes clathrin-dependent internalization long before endosomal fusion, thus minimizing the surface exposure of conserved viral epitopes during fusion and reducing the efficacy of inhibitors targeting these epitopes. Membranes fusion leads to delivery of the nucleocapsid into the cytoplasm. Its function is as follows. The envelope glycoprotein gp160 precursor down-modulates cell surface CD4 antigen by interacting with it in the endoplasmic reticulum and blocking its transport to the cell surface. The gp120-gp41 heterodimer seems to contribute to T-cell depletion during HIV-1 infection. The envelope glycoproteins expressed on the surface of infected cells induce apoptosis through an interaction with uninfected cells expressing the receptor (CD4) and the coreceptors CXCR4 or CCR5. This type of bystander killing may be obtained by at least three distinct mechanisms. First, the interaction between the 2 cells can induce cellular fusion followed by nuclear fusion within the syncytium. Syncytia are condemned to die from apoptosis. Second, the 2 interacting cells may not fuse entirely and simply exchange plasma membrane lipids, after a sort of hemifusion process, followed by rapid death. Third, it is possible that virus-infected cells, on the point of undergoing apoptosis, fuse with CD4-expressing cells, in which case apoptosis is rapidly transmitted from one cell to the other and thus occurs in a sort of contagious fashion. Functionally, the gp120-gp41 heterodimer allows rapid transcytosis of the virus through CD4 negative cells such as simple epithelial monolayers of the intestinal, rectal and endocervical epithelial barriers. Both gp120 and gp41 specifically recognize glycosphingolipids galactosyl-ceramide (GalCer) or 3' sulfo-galactosyl-ceramide (GalS) present in the lipid rafts structures of epithelial cells. Binding to these alternative receptors allows the rapid transcytosis of the virus through the epithelial cells. This transcytotic vesicle-mediated transport of virions from the apical side to the basolateral side of the epithelial cells does not involve infection of the cells themselves. The protein is Envelope glycoprotein gp160 (env) of Human immunodeficiency virus type 2 subtype A (isolate D194) (HIV-2).